Here is a 112-residue protein sequence, read N- to C-terminus: Large ribosomal subunit protein P2 (112 aa).

Low complexity predominate over residues 69–85 (AGGAAMPAAAAGGAPAA). Positions 69–112 (AGGAAMPAAAAGGAPAAAEDKAEAKKPEAEPEEEEDDMGFSLFD) are disordered. Positions 86 to 97 (AEDKAEAKKPEA) are enriched in basic and acidic residues.

Belongs to the eukaryotic ribosomal protein P1/P2 family. As to quaternary structure, P1 and P2 exist as dimers at the large ribosomal subunit. Post-translationally, phosphorylated.

In terms of biological role, plays an important role in the elongation step of protein synthesis. The chain is Large ribosomal subunit protein P2 from Babesia bovis.